The following is a 349-amino-acid chain: Phosphoribosylformylglycinamidine cyclo-ligase (349 aa).

Belongs to the AIR synthase family.

It localises to the cytoplasm. The enzyme catalyses 2-formamido-N(1)-(5-O-phospho-beta-D-ribosyl)acetamidine + ATP = 5-amino-1-(5-phospho-beta-D-ribosyl)imidazole + ADP + phosphate + H(+). It participates in purine metabolism; IMP biosynthesis via de novo pathway; 5-amino-1-(5-phospho-D-ribosyl)imidazole from N(2)-formyl-N(1)-(5-phospho-D-ribosyl)glycinamide: step 2/2. This chain is Phosphoribosylformylglycinamidine cyclo-ligase, found in Psychrobacter arcticus (strain DSM 17307 / VKM B-2377 / 273-4).